The primary structure comprises 378 residues: uncharacterized protein (378 aa).

Cys-16 serves as the catalytic For GATase activity. One can recognise a Glutamine amidotransferase type-2 domain in the interval Cys-16–Glu-378.

This is an uncharacterized protein from Archaeoglobus fulgidus (strain ATCC 49558 / DSM 4304 / JCM 9628 / NBRC 100126 / VC-16).